We begin with the raw amino-acid sequence, 424 residues long: Serine--tRNA ligase (424 aa).

230-232 (TAE) lines the L-serine pocket. 261-263 (RSE) is a binding site for ATP. L-serine is bound at residue E284. 348 to 351 (EISS) contributes to the ATP binding site. Position 384 (S384) interacts with L-serine.

Belongs to the class-II aminoacyl-tRNA synthetase family. Type-1 seryl-tRNA synthetase subfamily. Homodimer. The tRNA molecule binds across the dimer.

The protein resides in the cytoplasm. The catalysed reaction is tRNA(Ser) + L-serine + ATP = L-seryl-tRNA(Ser) + AMP + diphosphate + H(+). The enzyme catalyses tRNA(Sec) + L-serine + ATP = L-seryl-tRNA(Sec) + AMP + diphosphate + H(+). It functions in the pathway aminoacyl-tRNA biosynthesis; selenocysteinyl-tRNA(Sec) biosynthesis; L-seryl-tRNA(Sec) from L-serine and tRNA(Sec): step 1/1. Its function is as follows. Catalyzes the attachment of serine to tRNA(Ser). Is also able to aminoacylate tRNA(Sec) with serine, to form the misacylated tRNA L-seryl-tRNA(Sec), which will be further converted into selenocysteinyl-tRNA(Sec). This is Serine--tRNA ligase from Streptococcus pneumoniae (strain ATCC 700669 / Spain 23F-1).